The following is a 742-amino-acid chain: Zinc finger protein 700 (742 aa).

A disordered region spans residues 1-20; sequence MPCCSHRSCREDPGTSESRE. Over residues 8-20 the composition is skewed to basic and acidic residues; that stretch reads SCREDPGTSESRE. Residues 24–104 form the KRAB domain; that stretch reads VAFEDVAVNF…KEDSHCGETF (81 aa). 9 consecutive C2H2-type zinc fingers follow at residues 194-216, 222-244, 250-272, 278-300, 306-328, 362-384, 390-412, 418-440, and 446-468; these read YACK…MVMH, YKCK…ERTH, YECK…ERTH, YECS…ERSH, YQCK…ERTH, YKCK…EKTH, YKCK…ERIH, YECK…GGTH, and YECK…GRTH. A C2H2-type 10; degenerate zinc finger spans residues 474–502; it reads YECKECGKAFRYVKHLQIHERTEKHIRMP. 8 consecutive C2H2-type zinc fingers follow at residues 508-530, 536-558, 564-586, 592-614, 620-642, 648-670, 676-698, and 704-726; these read YKCS…EKTH, YECN…ERTH, YECK…ERTH, YECK…GRTH, YECK…ERKH, and YECK…ARTH.

It belongs to the krueppel C2H2-type zinc-finger protein family.

It localises to the nucleus. May be involved in transcriptional regulation. This Homo sapiens (Human) protein is Zinc finger protein 700 (ZNF700).